The sequence spans 195 residues: Thymidine kinase (195 aa).

Residues 9 to 16 and 87 to 90 contribute to the ATP site; these read STMNAGKS and DEAQ. Glu88 functions as the Proton acceptor in the catalytic mechanism. Positions 145, 147, 182, and 185 each coordinate Zn(2+).

This sequence belongs to the thymidine kinase family. As to quaternary structure, homotetramer.

Its subcellular location is the cytoplasm. The enzyme catalyses thymidine + ATP = dTMP + ADP + H(+). The polypeptide is Thymidine kinase (Jannaschia sp. (strain CCS1)).